We begin with the raw amino-acid sequence, 674 residues long: Kelch repeat and BTB domain-containing protein 6 (674 aa).

Positions 1–28 (MQSREDAPRSRRLASPRGGKRPKKIHKP) are disordered. Residues 10 to 27 (SRRLASPRGGKRPKKIHK) are compositionally biased toward basic residues. In terms of domain architecture, BTB spans 63–138 (CDVTIEVVTP…CYTGRVSLSE (76 aa)). 6 Kelch repeats span residues 386–435 (AVCI…YLNG), 436–484 (YIYI…VIRD), 486–523 (LYAL…VFNE), 524–564 (EIYC…IIKH), 567–616 (KLLL…CLSA), and 642–673 (TEWD…RVAP). The interval 631-674 (TEEEEIPSESSTEWDLGGFSEPDSESGSSSSLSDDDFWVRVAPQ) is disordered. An ATG8 interaction motif (AIM) motif is present at residues 668–671 (WVRV).

In terms of assembly, core component of a BCR3 (BTB-CUL3-RBX1) E3 ubiquitin ligase complex, also named Cul3-RING ubiquitin ligase complex CUL3(KBTBD6/7), composed of CUL3, RBX1, KBTBD6 and KBTBD7. Interacts with GABARAP; the interaction is direct and is required for the ubiquitination of TIAM1. Interacts with GABARAPL1, GABARAPL2 and MAP1LC3B; the interaction is direct.

The protein localises to the cytoplasm. Its subcellular location is the nucleus. The protein operates within protein modification; protein ubiquitination. As part of the CUL3(KBTBD6/7) E3 ubiquitin ligase complex functions as a substrate adapter for the RAC1 guanine exchange factor (GEF) TIAM1, mediating its 'Lys-48' ubiquitination and proteasomal degradation. By controlling this ubiquitination, regulates RAC1 signal transduction and downstream biological processes including the organization of the cytoskeleton, cell migration and cell proliferation. Ubiquitination of TIAM1 requires the membrane-associated protein GABARAP which may restrict locally the activity of the complex. The protein is Kelch repeat and BTB domain-containing protein 6 of Homo sapiens (Human).